A 466-amino-acid polypeptide reads, in one-letter code: 3-isopropylmalate dehydratase large subunit (466 aa).

Cys347, Cys407, and Cys410 together coordinate [4Fe-4S] cluster.

The protein belongs to the aconitase/IPM isomerase family. LeuC type 1 subfamily. Heterodimer of LeuC and LeuD. The cofactor is [4Fe-4S] cluster.

The catalysed reaction is (2R,3S)-3-isopropylmalate = (2S)-2-isopropylmalate. The protein operates within amino-acid biosynthesis; L-leucine biosynthesis; L-leucine from 3-methyl-2-oxobutanoate: step 2/4. In terms of biological role, catalyzes the isomerization between 2-isopropylmalate and 3-isopropylmalate, via the formation of 2-isopropylmaleate. The sequence is that of 3-isopropylmalate dehydratase large subunit from Shigella boydii serotype 4 (strain Sb227).